We begin with the raw amino-acid sequence, 790 residues long: Nuclear cap-binding protein subunit 1 (790 aa).

Residues 1 to 26 (MSRRRHSDENDGGQPHKRRKTSDANE) form a disordered region. Positions 3 to 20 (RRRHSDENDGGQPHKRRK) match the Nuclear localization signal motif. Residue serine 7 is modified to Phosphoserine; by RPS6KB1. Threonine 21 is subject to Phosphothreonine; by RPS6KB1. Position 22 is a phosphoserine; by RPS6KB1 (serine 22). In terms of domain architecture, MIF4G spans 28–240 (EDHLESLICK…CLWAQIQKLK (213 aa)). Residue serine 201 is modified to Phosphoserine. Lysine 204 carries the N6-acetyllysine modification. Positions 643-713 (STIRKMNKHV…SEQKNLFLVI (71 aa)) form a coiled coil. Lysine 684 is covalently cross-linked (Glycyl lysine isopeptide (Lys-Gly) (interchain with G-Cter in SUMO2)). N6-acetyllysine is present on lysine 698.

It belongs to the NCBP1 family. In terms of assembly, component of the nuclear cap-binding complex (CBC), a heterodimer composed of NCBP1/CBP80 and NCBP2/CBP20 that interacts with m7GpppG-capped RNA. Found in a U snRNA export complex containing PHAX/RNUXA, NCBP1/CBP80, NCBP2/CBP20, RAN, XPO1 and m7G-capped RNA. Identified in a IGF2BP1-dependent mRNP granule complex containing untranslated mRNAs. Interacts with PHAX/RNUXA, SRRT/ARS2, EIF4G2, IGF2BP1, HNRNPF, HNRNPH1, KIAA0427/CTIF, PARN, DROSHA, UPF1 and ALYREF/THOC4. May interact with EIF4G1; the interaction is however controversial since it is reported by PubMed:11340157, PubMed:15059963 and PubMed:15361857, but is not observed by PubMed:19648179. The large PER complex involved in the repression of transcriptional termination is composed of at least PER2, CDK9, DDX5, DHX9, NCBP1/CBP80 and POLR2A. Component of an alternative nuclear cap-binding complex (CBC) composed of NCBP1/CBP80 and NCBP3. Interacts with METTL3. Interacts with ZFC3H1 in a RNase-insensitive manner. Interacts with MTREX. Interacts with TASOR. Interacts with DHX34; the interaction is RNA-dependent. Interacts with KPNA3. Dephosphorylated at Thr-21 by the PNUTS-PP1 complex during RNA polymerase II transcription pause-release.

The protein localises to the nucleus. It is found in the cytoplasm. In terms of biological role, component of the cap-binding complex (CBC), which binds cotranscriptionally to the 5'-cap of pre-mRNAs and is involved in various processes such as pre-mRNA splicing, translation regulation, nonsense-mediated mRNA decay, RNA-mediated gene silencing (RNAi) by microRNAs (miRNAs) and mRNA export. The CBC complex is involved in mRNA export from the nucleus via its interaction with ALYREF/THOC4/ALY, leading to the recruitment of the mRNA export machinery to the 5'-end of mRNA and to mRNA export in a 5' to 3' direction through the nuclear pore. The CBC complex is also involved in mediating U snRNA and intronless mRNAs export from the nucleus. The CBC complex is essential for a pioneer round of mRNA translation, before steady state translation when the CBC complex is replaced by cytoplasmic cap-binding protein eIF4E. The pioneer round of mRNA translation mediated by the CBC complex plays a central role in nonsense-mediated mRNA decay (NMD), NMD only taking place in mRNAs bound to the CBC complex, but not on eIF4E-bound mRNAs. The CBC complex enhances NMD in mRNAs containing at least one exon-junction complex (EJC) via its interaction with UPF1, promoting the interaction between UPF1 and UPF2. The CBC complex is also involved in 'failsafe' NMD, which is independent of the EJC complex, while it does not participate in Staufen-mediated mRNA decay (SMD). During cell proliferation, the CBC complex is also involved in microRNAs (miRNAs) biogenesis via its interaction with SRRT/ARS2 and is required for miRNA-mediated RNA interference. The CBC complex also acts as a negative regulator of PARN, thereby acting as an inhibitor of mRNA deadenylation. In the CBC complex, NCBP1/CBP80 does not bind directly capped RNAs (m7GpppG-capped RNA) but is required to stabilize the movement of the N-terminal loop of NCBP2/CBP20 and lock the CBC into a high affinity cap-binding state with the cap structure. Associates with NCBP3 to form an alternative cap-binding complex (CBC) which plays a key role in mRNA export and is particularly important in cellular stress situations such as virus infections. The conventional CBC with NCBP2 binds both small nuclear RNA (snRNA) and messenger (mRNA) and is involved in their export from the nucleus whereas the alternative CBC with NCBP3 does not bind snRNA and associates only with mRNA thereby playing a role only in mRNA export. NCBP1/CBP80 is required for cell growth and viability. The chain is Nuclear cap-binding protein subunit 1 (NCBP1) from Homo sapiens (Human).